We begin with the raw amino-acid sequence, 436 residues long: Probable sodium/metabolite cotransporter BASS4, chloroplastic (436 aa).

The N-terminal 47 residues, 1–47 (MAIASTLASTQNPFLCLRQPPSPGNRSVVFRRCQDPCGRRWISRSIR), are a transit peptide targeting the chloroplast. 9 helical membrane-spanning segments follow: residues 109–129 (FLPLALVSGVGLGFANPTLGC), 131–151 (ADKYSFTKISTCGIFIISGLT), 157–177 (IGAAVKGWPLGLFGLISILLL), 195–215 (LVTGLGIFCCMPTTLSSGVAL), 225–245 (LALAVTVASNLLGILTIPFWV), 257–277 (FPTDQLFRSLIVTLLIPLIIG), 297–314 (LFSKINAICLSLVPWIQV), 328–348 (VFLAAVGIGILLHLSLLAFNA), and 403–423 (PCVAAHLNQIMIDSVLVNLWL).

The protein belongs to the bile acid:sodium symporter (BASS) (TC 2.A.28) family.

The protein localises to the membrane. The protein resides in the plastid. It is found in the chloroplast envelope. In terms of biological role, may function as sodium-coupled metabolite transporter across the chloroplast envelope. This is Probable sodium/metabolite cotransporter BASS4, chloroplastic (BASS4) from Arabidopsis thaliana (Mouse-ear cress).